Here is a 500-residue protein sequence, read N- to C-terminus: L-arabinose isomerase (500 aa).

Residues E306, E333, H349, and H448 each contribute to the Mn(2+) site.

This sequence belongs to the arabinose isomerase family. Mn(2+) is required as a cofactor.

The enzyme catalyses beta-L-arabinopyranose = L-ribulose. It participates in carbohydrate degradation; L-arabinose degradation via L-ribulose; D-xylulose 5-phosphate from L-arabinose (bacterial route): step 1/3. Its function is as follows. Catalyzes the conversion of L-arabinose to L-ribulose. In Shewanella sp. (strain MR-4), this protein is L-arabinose isomerase.